The chain runs to 238 residues: DNA damage-regulated autophagy modulator protein 1 (238 aa).

6 helical membrane passes run 9–29, 53–73, 91–111, 116–136, 161–181, and 200–220; these read AFVP…SYVV, SGIF…TMYT, VFNL…GIVA, LAVP…GVVY, MVIS…ASLI, and VSAI…LTFI.

It belongs to the DRAM/TMEM150 family.

Its subcellular location is the lysosome membrane. Its function is as follows. Lysosomal modulator of autophagy that plays a central role in p53/TP53-mediated apoptosis. Not involved in p73/TP73-mediated autophagy. This Homo sapiens (Human) protein is DNA damage-regulated autophagy modulator protein 1 (DRAM1).